A 172-amino-acid chain; its full sequence is Myosin regulatory light chain 12B (172 aa).

Over residues 1-16 (MSSKKAKTKTTKKRPQ) the composition is skewed to basic residues. The interval 1-20 (MSSKKAKTKTTKKRPQRATS) is disordered. Thr-19 carries the post-translational modification Phosphothreonine; by MLCK and ZIPK/DAPK3. Ser-20 is modified (phosphoserine; by MLCK and ZIPK/DAPK3). EF-hand domains lie at 29 to 64 (SQIQ…LGKN), 98 to 133 (DPED…MGDR), and 134 to 169 (FTDE…GAKD). Ca(2+)-binding residues include Asp-42, Asn-44, Asp-46, and Asp-53.

In terms of assembly, myosin is a hexamer of 2 heavy chains and 4 light chains: interacts with myosin heavy chain MYO19. In terms of processing, phosphorylation increases the actin-activated myosin ATPase activity and thereby regulates the contractile activity. It is required to generate the driving force in the migration of the cells but not necessary for localization of myosin-2 at the leading edge. Phosphorylation is reduced following epigallocatechin-3-O-gallate treatment. Ubiquitously expressed in various hematopoietic cells.

Its function is as follows. Myosin regulatory subunit that plays an important role in regulation of both smooth muscle and nonmuscle cell contractile activity via its phosphorylation. Phosphorylation triggers actin polymerization in vascular smooth muscle. Implicated in cytokinesis, receptor capping, and cell locomotion. The polypeptide is Myosin regulatory light chain 12B (MYL12B) (Homo sapiens (Human)).